The chain runs to 359 residues: Alanine racemase (359 aa).

K35 functions as the Proton acceptor; specific for D-alanine in the catalytic mechanism. K35 is modified (N6-(pyridoxal phosphate)lysine). R130 serves as a coordination point for substrate. The active-site Proton acceptor; specific for L-alanine is Y255. M303 provides a ligand contact to substrate.

It belongs to the alanine racemase family. It depends on pyridoxal 5'-phosphate as a cofactor.

The catalysed reaction is L-alanine = D-alanine. It participates in amino-acid biosynthesis; D-alanine biosynthesis; D-alanine from L-alanine: step 1/1. Its function is as follows. Catalyzes the interconversion of L-alanine and D-alanine. May also act on other amino acids. The chain is Alanine racemase (alr) from Janthinobacterium sp. (strain Marseille) (Minibacterium massiliensis).